The following is a 432-amino-acid chain: Putative O-antigen transporter (432 aa).

Helical transmembrane passes span 14–34 (IIAA…LVSV), 47–67 (AVFT…IGIG), 90–110 (AAVH…FFLS), 134–154 (FIAS…KILF), 164–184 (IINA…HYLM), 189–209 (ITFA…IYIS), 234–254 (GFLI…IVMS), 271–291 (IFGL…PVCA), 305–325 (IIFL…LFIY), 334–354 (IIAN…LAVY), 376–396 (ILWL…WYFA), and 400–420 (GIVG…FWGL).

Its subcellular location is the cell inner membrane. It functions in the pathway bacterial outer membrane biogenesis; LPS O-antigen biosynthesis. Functionally, may be involved in the translocation process of the nascent O-polysaccharide molecules and/or its ligation to lipid A core units. The polypeptide is Putative O-antigen transporter (rfbX) (Salmonella typhi).